Here is a 525-residue protein sequence, read N- to C-terminus: Sensory neuron membrane protein 1 (525 aa).

At 1 to 11 (MLLPKELKYAA) the chain is on the cytoplasmic side. The helical transmembrane segment at 12-32 (IAGGVAVFGLIFGWVLFPVIL) threads the bilayer. Residues 33-456 (KGQLKKEMAL…LKHQLFIPKR (424 aa)) lie on the Extracellular side of the membrane. N-linked (GlcNAc...) asparagine glycans are attached at residues Asn-67, Asn-229, and Asn-324. 3 disulfide bridges follow: Cys-268/Cys-333, Cys-297/Cys-352, and Cys-335/Cys-341. Asn-440 carries N-linked (GlcNAc...) asparagine glycosylation. The chain crosses the membrane as a helical span at residues 457-477 (VVGVLRWWMVSFGSLGADIGI). The Cytoplasmic segment spans residues 478 to 525 (VYHFRDHIMRLAVSGDTKVSKVTPEEDPEQKDISVIGPPAQEPAKINI). The segment at 497 to 525 (SKVTPEEDPEQKDISVIGPPAQEPAKINI) is disordered.

Belongs to the CD36 family.

The protein resides in the cell membrane. Functionally, plays an olfactory role that is not restricted to pheromone sensitivity. In Mamestra brassicae (Cabbage moth), this protein is Sensory neuron membrane protein 1.